We begin with the raw amino-acid sequence, 210 residues long: Urease accessory protein UreE (210 aa).

The segment at Pro-144 to Arg-210 is disordered. The span at His-156–His-202 shows a compositional bias: basic and acidic residues.

It belongs to the UreE family.

The protein localises to the cytoplasm. Its function is as follows. Involved in urease metallocenter assembly. Binds nickel. Probably functions as a nickel donor during metallocenter assembly. The polypeptide is Urease accessory protein UreE (Paracidovorax citrulli (strain AAC00-1) (Acidovorax citrulli)).